A 152-amino-acid chain; its full sequence is Peptide deformylase (152 aa).

Fe cation-binding residues include Cys91 and His133. Residue Glu134 is part of the active site. Residue His137 coordinates Fe cation.

It belongs to the polypeptide deformylase family. It depends on Fe(2+) as a cofactor.

It catalyses the reaction N-terminal N-formyl-L-methionyl-[peptide] + H2O = N-terminal L-methionyl-[peptide] + formate. Removes the formyl group from the N-terminal Met of newly synthesized proteins. Requires at least a dipeptide for an efficient rate of reaction. N-terminal L-methionine is a prerequisite for activity but the enzyme has broad specificity at other positions. This chain is Peptide deformylase, found in Wigglesworthia glossinidia brevipalpis.